We begin with the raw amino-acid sequence, 120 residues long: Ribonuclease P protein component 2 (120 aa).

Belongs to the eukaryotic/archaeal RNase P protein component 2 family. As to quaternary structure, consists of a catalytic RNA component and at least 4-5 protein subunits.

It is found in the cytoplasm. It catalyses the reaction Endonucleolytic cleavage of RNA, removing 5'-extranucleotides from tRNA precursor.. Functionally, part of ribonuclease P, a protein complex that generates mature tRNA molecules by cleaving their 5'-ends. The polypeptide is Ribonuclease P protein component 2 (Thermococcus gammatolerans (strain DSM 15229 / JCM 11827 / EJ3)).